A 1681-amino-acid chain; its full sequence is Probable clathrin heavy chain 1 (1681 aa).

7 WD40-like repeat regions span residues N22 to S65, A66 to D105, V106 to A147, G148 to E193, G194 to A255, G256 to D299, and T300 to D328. CHCR repeat units follow at residues S539–V685, A688–A830, I835–D974, L981–A1126, F1130–A1271, L1276–N1422, and L1425–F1568. Over residues E1616 to E1628 the composition is skewed to basic and acidic residues. The tract at residues E1616–M1635 is disordered.

This sequence belongs to the clathrin heavy chain family. Clathrin triskelions, composed of 3 heavy chains and 3 light chains, are the basic subunits of the clathrin coat. May interact with beta arrestin arr-1.

It localises to the cytoplasmic vesicle membrane. The protein resides in the membrane. Its subcellular location is the coated pit. Functionally, clathrin is the major protein of the polyhedral coat of coated pits and vesicles. May play a role in yolk protein clatherin-mediated endocytosis by oocytes during oogenesis. In Caenorhabditis elegans, this protein is Probable clathrin heavy chain 1 (chc-1).